Reading from the N-terminus, the 406-residue chain is CRISP/Allergen/PR-1 (406 aa).

Positions 1–18 (MHFQVILMMMWLWLEAEG) are cleaved as a signal peptide. A glycan (N-linked (GlcNAc...) asparagine) is linked at asparagine 39. The 148-residue stretch at 58-205 (LREHNKLRSR…TFKDLYTCNY (148 aa)) folds into the SCP domain.

This sequence belongs to the CRISP family. Post-translationally, contains 9 disulfide bonds. Expressed by the venom gland.

It localises to the secreted. The sequence is that of CRISP/Allergen/PR-1 from Trittame loki (Brush-footed trapdoor spider).